The following is a 162-amino-acid chain: ATP synthase subunit b (162 aa).

The chain crosses the membrane as a helical span at residues 6–25; it reads TLFTLVTFLVLMLAVGKVAW.

This sequence belongs to the ATPase B chain family. As to quaternary structure, F-type ATPases have 2 components, F(1) - the catalytic core - and F(0) - the membrane proton channel. F(1) has five subunits: alpha(3), beta(3), gamma(1), delta(1), epsilon(1). F(0) has three main subunits: a(1), b(2) and c(10-14). The alpha and beta chains form an alternating ring which encloses part of the gamma chain. F(1) is attached to F(0) by a central stalk formed by the gamma and epsilon chains, while a peripheral stalk is formed by the delta and b chains.

It is found in the cell membrane. Functionally, f(1)F(0) ATP synthase produces ATP from ADP in the presence of a proton or sodium gradient. F-type ATPases consist of two structural domains, F(1) containing the extramembraneous catalytic core and F(0) containing the membrane proton channel, linked together by a central stalk and a peripheral stalk. During catalysis, ATP synthesis in the catalytic domain of F(1) is coupled via a rotary mechanism of the central stalk subunits to proton translocation. In terms of biological role, component of the F(0) channel, it forms part of the peripheral stalk, linking F(1) to F(0). In Lacticaseibacillus casei (strain BL23) (Lactobacillus casei), this protein is ATP synthase subunit b.